The primary structure comprises 631 residues: Alpha-dioxygenase 2 (631 aa).

An N-terminal signal peptide occupies residues 1 to 20 (MGFSPSSSWFLHPQLHHVVS). A heme b-binding site is contributed by His-157. Tyr-378 serves as the catalytic Proton acceptor. His-381 provides a ligand contact to heme b. The N-linked (GlcNAc...) asparagine glycan is linked to Asn-583.

It belongs to the peroxidase family. Requires heme b as cofactor. In terms of tissue distribution, expressed in seedlings (cotyledons, young leaves, and hypocotyls), flowers, siliques and old leaves.

Alpha-dioxygenase that catalyzes the primary oxygenation of fatty acids into oxylipins. May be involved in the senescence process. In Arabidopsis thaliana (Mouse-ear cress), this protein is Alpha-dioxygenase 2 (DOX2).